We begin with the raw amino-acid sequence, 142 residues long: General odorant-binding protein 99a (142 aa).

The N-terminal stretch at 1–16 (MKVFVAICVLIGLASA) is a signal peptide. Disulfide bonds link cysteine 33-cysteine 64, cysteine 60-cysteine 116, and cysteine 105-cysteine 125.

This sequence belongs to the PBP/GOBP family. As to expression, expressed in larval chemosensory organ. Specifically expressed exclusively in a subset of chemosensory sensilla on the third antennal segment.

The protein localises to the secreted. In terms of biological role, present in the aqueous fluid surrounding olfactory sensory dendrites and are thought to aid in the capture and transport of hydrophobic odorants into and through this fluid. This Drosophila melanogaster (Fruit fly) protein is General odorant-binding protein 99a (Obp99a).